Consider the following 177-residue polypeptide: Actinorhodin polyketide dimerase (177 aa).

To S.pristinaespiralis SnaC.

It participates in antibiotic biosynthesis; actinorhodin biosynthesis. The sequence is that of Actinorhodin polyketide dimerase (actVB) from Streptomyces coelicolor (strain ATCC BAA-471 / A3(2) / M145).